A 618-amino-acid polypeptide reads, in one-letter code: Transcriptional regulator CPUR_05421 (618 aa).

A DNA-binding region (zn(2)-C6 fungal-type) is located at residues 14 to 41 (CSHLVGREIGCSRDLAGCRRCTSEGRAC). The disordered stretch occupies residues 52–87 (TRRRNRANQDVTRSALYSSNTTPQTISDQATGRPCE). Positions 59–81 (NQDVTRSALYSSNTTPQTISDQA) are enriched in polar residues.

It is found in the nucleus. Transcriptional regulator; part of the ergochrome gene cluster responsible for the typical purple-black color of the ergot sclerotia. The ergochrome gene cluster produces several ergot pigments including the yellow ergochrome secalonic acid and its derivatives, as well as the red anthraquinones endocrocin and clavorubin. The protein is Transcriptional regulator CPUR_05421 of Claviceps purpurea (strain 20.1) (Ergot fungus).